The following is a 281-amino-acid chain: uncharacterized protein (281 aa).

The next 4 membrane-spanning stretches (helical) occupy residues 8–28 (ALPV…FIWS), 97–117 (LAVA…RGYG), 147–167 (PARI…GLAV), and 210–230 (IASV…IVPA).

This sequence to S.pombe bem46 and yeast YNL320w.

It localises to the cell membrane. This is an uncharacterized protein from Mycobacterium tuberculosis (strain CDC 1551 / Oshkosh).